A 443-amino-acid polypeptide reads, in one-letter code: Glutamate-1-semialdehyde 2,1-aminomutase (443 aa).

N6-(pyridoxal phosphate)lysine is present on lysine 272.

This sequence belongs to the class-III pyridoxal-phosphate-dependent aminotransferase family. HemL subfamily. Homodimer. It depends on pyridoxal 5'-phosphate as a cofactor.

It localises to the cytoplasm. The enzyme catalyses (S)-4-amino-5-oxopentanoate = 5-aminolevulinate. The protein operates within porphyrin-containing compound metabolism; protoporphyrin-IX biosynthesis; 5-aminolevulinate from L-glutamyl-tRNA(Glu): step 2/2. It functions in the pathway porphyrin-containing compound metabolism; chlorophyll biosynthesis. The polypeptide is Glutamate-1-semialdehyde 2,1-aminomutase (Chloroflexus aurantiacus (strain ATCC 29366 / DSM 635 / J-10-fl)).